The sequence spans 311 residues: Small ribosomal subunit biogenesis GTPase RsgA (311 aa).

A CP-type G domain is found at Ser-88 to Phe-246. GTP is bound by residues Asn-137–Asp-140 and Gly-188–Thr-196. Positions 270, 275, 277, and 283 each coordinate Zn(2+).

This sequence belongs to the TRAFAC class YlqF/YawG GTPase family. RsgA subfamily. Monomer. Associates with 30S ribosomal subunit, binds 16S rRNA. It depends on Zn(2+) as a cofactor.

The protein localises to the cytoplasm. Functionally, one of several proteins that assist in the late maturation steps of the functional core of the 30S ribosomal subunit. Helps release RbfA from mature subunits. May play a role in the assembly of ribosomal proteins into the subunit. Circularly permuted GTPase that catalyzes slow GTP hydrolysis, GTPase activity is stimulated by the 30S ribosomal subunit. In Chlorobaculum parvum (strain DSM 263 / NCIMB 8327) (Chlorobium vibrioforme subsp. thiosulfatophilum), this protein is Small ribosomal subunit biogenesis GTPase RsgA.